Consider the following 406-residue polypeptide: Acetate kinase (406 aa).

Mg(2+) is bound at residue asparagine 7. An ATP-binding site is contributed by lysine 14. Arginine 90 serves as a coordination point for substrate. The active-site Proton donor/acceptor is the aspartate 147. Residues histidine 207–glycine 211, aspartate 283–arginine 285, and glycine 331–asparagine 335 contribute to the ATP site. Glutamate 385 is a Mg(2+) binding site.

It belongs to the acetokinase family. In terms of assembly, homodimer. It depends on Mg(2+) as a cofactor. The cofactor is Mn(2+).

The protein resides in the cytoplasm. The enzyme catalyses acetate + ATP = acetyl phosphate + ADP. Its pathway is metabolic intermediate biosynthesis; acetyl-CoA biosynthesis; acetyl-CoA from acetate: step 1/2. Functionally, catalyzes the formation of acetyl phosphate from acetate and ATP. Can also catalyze the reverse reaction. This Thermosipho africanus (strain TCF52B) protein is Acetate kinase.